Reading from the N-terminus, the 300-residue chain is Junctional adhesion molecule A (300 aa).

A signal peptide spans 1–26 (MGTEGKAGRKLLFLFTSMILGSLVQG). Residues 27-238 (KGSVYTAQSD…MDAVELNVGG (212 aa)) lie on the Extracellular side of the membrane. Ig-like V-type domains lie at 28–122 (GSVY…GEVS) and 134–230 (PTIS…AHMD). N-linked (GlcNAc...) asparagine glycosylation is present at asparagine 42. Cystine bridges form between cysteine 49/cysteine 108 and cysteine 152/cysteine 212. Asparagine 185 is a glycosylation site (N-linked (GlcNAc...) asparagine). A helical transmembrane segment spans residues 239–259 (IVAAVLVTLILLGLLIFGVWF). Residues 260–299 (AYSRGYFERTKKGTAPGKKVIYSQPSTRSEGEFKQTSSFL) lie on the Cytoplasmic side of the membrane. Phosphoserine occurs at positions 282, 285, and 288.

It belongs to the immunoglobulin superfamily. Interacts with the ninth PDZ domain of MPDZ. Interacts with the first PDZ domain of PARD3. The association between PARD3 and PARD6B probably disrupts this interaction. Interacts with ITGAL (via I-domain). Interacts with CD151.

Its subcellular location is the cell junction. It is found in the tight junction. The protein resides in the cell membrane. Functionally, seems to play a role in epithelial tight junction formation. Appears early in primordial forms of cell junctions and recruits PARD3. The association of the PARD6-PARD3 complex may prevent the interaction of PARD3 with JAM1, thereby preventing tight junction assembly. Plays a role in regulating monocyte transmigration involved in integrity of epithelial barrier. Ligand for integrin alpha-L/beta-2 involved in memory T-cell and neutrophil transmigration. Involved in platelet activation. This is Junctional adhesion molecule A (F11r) from Mus musculus (Mouse).